We begin with the raw amino-acid sequence, 363 residues long: Peptide chain release factor 2 (363 aa).

N5-methylglutamine is present on Q251.

It belongs to the prokaryotic/mitochondrial release factor family. In terms of processing, methylated by PrmC. Methylation increases the termination efficiency of RF2.

Its subcellular location is the cytoplasm. In terms of biological role, peptide chain release factor 2 directs the termination of translation in response to the peptide chain termination codons UGA and UAA. The protein is Peptide chain release factor 2 of Helicobacter pylori (strain Shi470).